A 180-amino-acid polypeptide reads, in one-letter code: Peptidyl-tRNA hydrolase (180 aa).

Tyrosine 15 lines the tRNA pocket. The active-site Proton acceptor is the histidine 20. TRNA is bound by residues phenylalanine 67, asparagine 69, and asparagine 115.

The protein belongs to the PTH family. In terms of assembly, monomer.

The protein localises to the cytoplasm. It catalyses the reaction an N-acyl-L-alpha-aminoacyl-tRNA + H2O = an N-acyl-L-amino acid + a tRNA + H(+). Functionally, hydrolyzes ribosome-free peptidyl-tRNAs (with 1 or more amino acids incorporated), which drop off the ribosome during protein synthesis, or as a result of ribosome stalling. Catalyzes the release of premature peptidyl moieties from peptidyl-tRNA molecules trapped in stalled 50S ribosomal subunits, and thus maintains levels of free tRNAs and 50S ribosomes. The polypeptide is Peptidyl-tRNA hydrolase (Chlamydia pneumoniae (Chlamydophila pneumoniae)).